The primary structure comprises 108 residues: uncharacterized protein (108 aa).

This is an uncharacterized protein from Enterobacteria phage T4 (Bacteriophage T4).